Reading from the N-terminus, the 430-residue chain is Citrate synthase (430 aa).

Active-site residues include histidine 305 and aspartate 363.

Belongs to the citrate synthase family. Homohexamer.

It carries out the reaction oxaloacetate + acetyl-CoA + H2O = citrate + CoA + H(+). The protein operates within carbohydrate metabolism; tricarboxylic acid cycle; isocitrate from oxaloacetate: step 1/2. With respect to regulation, allosterically inhibited by NADH. This chain is Citrate synthase (gltA), found in Coxiella burnetii (strain RSA 493 / Nine Mile phase I).